Here is a 483-residue protein sequence, read N- to C-terminus: Xylulose kinase (483 aa).

79-80 (MH) contacts substrate.

Belongs to the FGGY kinase family.

The catalysed reaction is D-xylulose + ATP = D-xylulose 5-phosphate + ADP + H(+). Functionally, catalyzes the phosphorylation of D-xylulose to D-xylulose 5-phosphate. In Staphylococcus xylosus, this protein is Xylulose kinase.